The following is a 500-amino-acid chain: Probable cytosol aminopeptidase (500 aa).

Mn(2+)-binding residues include K265 and D270. The active site involves K277. Mn(2+) contacts are provided by D288, D347, and E349. The active site involves R351.

It belongs to the peptidase M17 family. Mn(2+) serves as cofactor.

The protein localises to the cytoplasm. The catalysed reaction is Release of an N-terminal amino acid, Xaa-|-Yaa-, in which Xaa is preferably Leu, but may be other amino acids including Pro although not Arg or Lys, and Yaa may be Pro. Amino acid amides and methyl esters are also readily hydrolyzed, but rates on arylamides are exceedingly low.. It carries out the reaction Release of an N-terminal amino acid, preferentially leucine, but not glutamic or aspartic acids.. In terms of biological role, presumably involved in the processing and regular turnover of intracellular proteins. Catalyzes the removal of unsubstituted N-terminal amino acids from various peptides. The protein is Probable cytosol aminopeptidase of Rickettsia peacockii (strain Rustic).